The primary structure comprises 513 residues: Probable cytosol aminopeptidase (513 aa).

Lys-277 and Asp-282 together coordinate Mn(2+). Lys-289 is an active-site residue. Mn(2+) contacts are provided by Asp-300, Asp-359, and Glu-361. Residue Arg-363 is part of the active site.

This sequence belongs to the peptidase M17 family. Mn(2+) is required as a cofactor.

Its subcellular location is the cytoplasm. It carries out the reaction Release of an N-terminal amino acid, Xaa-|-Yaa-, in which Xaa is preferably Leu, but may be other amino acids including Pro although not Arg or Lys, and Yaa may be Pro. Amino acid amides and methyl esters are also readily hydrolyzed, but rates on arylamides are exceedingly low.. The enzyme catalyses Release of an N-terminal amino acid, preferentially leucine, but not glutamic or aspartic acids.. Functionally, presumably involved in the processing and regular turnover of intracellular proteins. Catalyzes the removal of unsubstituted N-terminal amino acids from various peptides. The polypeptide is Probable cytosol aminopeptidase (Mycobacterium sp. (strain JLS)).